The sequence spans 190 residues: Holliday junction branch migration complex subunit RuvA (190 aa).

Residues methionine 1 to glycine 64 are domain I. The interval serine 65–glycine 137 is domain II. Residues glycine 137–histidine 141 form a flexible linker region. A domain III region spans residues alanine 142 to arginine 190.

This sequence belongs to the RuvA family. Homotetramer. Forms an RuvA(8)-RuvB(12)-Holliday junction (HJ) complex. HJ DNA is sandwiched between 2 RuvA tetramers; dsDNA enters through RuvA and exits via RuvB. An RuvB hexamer assembles on each DNA strand where it exits the tetramer. Each RuvB hexamer is contacted by two RuvA subunits (via domain III) on 2 adjacent RuvB subunits; this complex drives branch migration. In the full resolvosome a probable DNA-RuvA(4)-RuvB(12)-RuvC(2) complex forms which resolves the HJ.

Its subcellular location is the cytoplasm. The RuvA-RuvB-RuvC complex processes Holliday junction (HJ) DNA during genetic recombination and DNA repair, while the RuvA-RuvB complex plays an important role in the rescue of blocked DNA replication forks via replication fork reversal (RFR). RuvA specifically binds to HJ cruciform DNA, conferring on it an open structure. The RuvB hexamer acts as an ATP-dependent pump, pulling dsDNA into and through the RuvAB complex. HJ branch migration allows RuvC to scan DNA until it finds its consensus sequence, where it cleaves and resolves the cruciform DNA. The sequence is that of Holliday junction branch migration complex subunit RuvA from Bordetella parapertussis (strain 12822 / ATCC BAA-587 / NCTC 13253).